The sequence spans 408 residues: Protein CNPPD1 (408 aa).

Residues 233–253 (CLLAVAYVSSVALAVASMAVI) traverse the membrane as a helical segment.

It belongs to the CNPPD1 family.

Its subcellular location is the membrane. This chain is Protein CNPPD1 (Cnppd1), found in Rattus norvegicus (Rat).